Here is a 140-residue protein sequence, read N- to C-terminus: ATP synthase epsilon chain (140 aa).

The protein belongs to the ATPase epsilon chain family. In terms of assembly, F-type ATPases have 2 components, CF(1) - the catalytic core - and CF(0) - the membrane proton channel. CF(1) has five subunits: alpha(3), beta(3), gamma(1), delta(1), epsilon(1). CF(0) has three main subunits: a, b and c.

The protein resides in the cell membrane. In terms of biological role, produces ATP from ADP in the presence of a proton gradient across the membrane. This is ATP synthase epsilon chain (atpC) from Enterococcus hirae (strain ATCC 9790 / DSM 20160 / JCM 8729 / LMG 6399 / NBRC 3181 / NCIMB 6459 / NCDO 1258 / NCTC 12367 / WDCM 00089 / R).